Reading from the N-terminus, the 293-residue chain is Methylsterol monooxygenase 1 (293 aa).

Helical transmembrane passes span 55 to 75 and 100 to 120; these read LIVHEALYFSFCLPGFLFQFI and VLLFNHFCIQLPLICGTYYFT. Residues 145-274 enclose the Fatty acid hydroxylase domain; it reads CAVIEDTWHY…FTWWDRIFGT (130 aa). The Histidine box-1 motif lies at 157–161; it reads HRLLH. Residues 170-174 carry the Histidine box-2 motif; it reads HKVHH. Residues 199 to 219 traverse the membrane as a helical segment; the sequence is FFIGIVLLCDHVILLWAWVTI. The Histidine box-3 signature appears at 249-255; the sequence is HHDFHHM.

The protein belongs to the sterol desaturase family. Requires Fe cation as cofactor. Ubiquitinated by MARCHF6, leading to proteasomal degradation.

The protein localises to the endoplasmic reticulum membrane. It catalyses the reaction 4,4-dimethyl-5alpha-cholest-7-en-3beta-ol + 6 Fe(II)-[cytochrome b5] + 3 O2 + 5 H(+) = 4alpha-carboxy-4beta-methyl-5alpha-cholest-7-ene-3beta-ol + 6 Fe(III)-[cytochrome b5] + 4 H2O. The catalysed reaction is 4,4-dimethyl-5alpha-cholesta-8,24-dien-3beta-ol + 6 Fe(II)-[cytochrome b5] + 3 O2 + 5 H(+) = 4beta-methylzymosterol-4alpha-carboxylate + 6 Fe(III)-[cytochrome b5] + 4 H2O. The enzyme catalyses 4alpha-methylzymosterol + 6 Fe(II)-[cytochrome b5] + 3 O2 + 5 H(+) = 4alpha-carboxyzymosterol + 6 Fe(III)-[cytochrome b5] + 4 H2O. It carries out the reaction 4alpha-methyl-5alpha-cholest-7-en-3beta-ol + 6 Fe(II)-[cytochrome b5] + 3 O2 + 5 H(+) = 4alpha-carboxy-5alpha-cholest-7-en-3beta-ol + 6 Fe(III)-[cytochrome b5] + 4 H2O. It catalyses the reaction 4,4-dimethyl-5alpha-cholest-8-en-3beta-ol + 6 Fe(II)-[cytochrome b5] + 3 O2 + 5 H(+) = 4alpha-carboxy-4beta-methyl-5alpha-cholest-8-en-3beta-ol + 6 Fe(III)-[cytochrome b5] + 4 H2O. The catalysed reaction is 4alpha-methyl-5alpha-cholest-8-en-3beta-ol + 6 Fe(II)-[cytochrome b5] + 3 O2 + 5 H(+) = 4alpha-carboxy-5alpha-cholest-8-ene-3beta-ol + 6 Fe(III)-[cytochrome b5] + 4 H2O. It participates in steroid biosynthesis; zymosterol biosynthesis; zymosterol from lanosterol: step 3/6. Its pathway is steroid biosynthesis; cholesterol biosynthesis. Its function is as follows. Catalyzes the three-step monooxygenation required for the demethylation of 4,4-dimethyl and 4alpha-methylsterols, which can be subsequently metabolized to cholesterol. The protein is Methylsterol monooxygenase 1 (MSMO1) of Macaca fascicularis (Crab-eating macaque).